Consider the following 367-residue polypeptide: tRNA-specific 2-thiouridylase MnmA (367 aa).

ATP contacts are provided by residues 11–18 (GLSGGVDS) and Leu37. The Nucleophile role is filled by Cys99. A disulfide bridge links Cys99 with Cys195. Gly123 contacts ATP. The interaction with tRNA stretch occupies residues 145-147 (KDQ). Cys195 serves as the catalytic Cysteine persulfide intermediate. Residues 304 to 305 (RY) are interaction with tRNA.

Belongs to the MnmA/TRMU family.

It is found in the cytoplasm. The catalysed reaction is S-sulfanyl-L-cysteinyl-[protein] + uridine(34) in tRNA + AH2 + ATP = 2-thiouridine(34) in tRNA + L-cysteinyl-[protein] + A + AMP + diphosphate + H(+). Catalyzes the 2-thiolation of uridine at the wobble position (U34) of tRNA, leading to the formation of s(2)U34. This chain is tRNA-specific 2-thiouridylase MnmA, found in Chlorobium luteolum (strain DSM 273 / BCRC 81028 / 2530) (Pelodictyon luteolum).